The following is a 266-amino-acid chain: Undecaprenyl-diphosphatase (266 aa).

Transmembrane regions (helical) follow at residues 41 to 61 (YAYS…LIYF), 82 to 102 (LVYI…LYYV), 106 to 126 (WLVV…AVVL), 159 to 179 (AVSV…LLLL), 191 to 211 (FVLV…SEGG), 213 to 233 (VATA…IITI), and 246 to 266 (VLVN…RIIF).

It belongs to the UppP family.

It is found in the cell membrane. The enzyme catalyses di-trans,octa-cis-undecaprenyl diphosphate + H2O = di-trans,octa-cis-undecaprenyl phosphate + phosphate + H(+). In terms of biological role, catalyzes the dephosphorylation of undecaprenyl diphosphate (UPP). The chain is Undecaprenyl-diphosphatase from Pyrobaculum aerophilum (strain ATCC 51768 / DSM 7523 / JCM 9630 / CIP 104966 / NBRC 100827 / IM2).